A 663-amino-acid polypeptide reads, in one-letter code: Zeaxanthin epoxidase, chloroplastic (663 aa).

The N-terminal 50 residues, 1-50 (MYSTVFYTSVHPSTSAFSRKQLPLLISKDFPTELYHSLPCSRSLENGQIK), are a transit peptide targeting the chloroplast. Residues 81 to 109 (KVLV…LVFE) and 359 to 372 (TFSW…LLGD) each bind FAD. Residues 547-611 (LVLSRDENMP…HGTWITDNEG (65 aa)) form the FHA domain.

The cofactor is FAD. As to expression, higher expression in leaves than in roots.

The protein localises to the plastid. Its subcellular location is the chloroplast membrane. The protein resides in the chloroplast thylakoid membrane. The catalysed reaction is all-trans-zeaxanthin + 4 reduced [2Fe-2S]-[ferredoxin] + 2 O2 + 4 H(+) = all-trans-violaxanthin + 4 oxidized [2Fe-2S]-[ferredoxin] + 2 H2O. Its pathway is plant hormone biosynthesis; abscisate biosynthesis. Functionally, converts zeaxanthin into antheraxanthin and subsequently violaxanthin. Involved in the epoxidation of zeaxanthin. Plays an important role in resistance to stresses, seed development and dormancy. This Nicotiana plumbaginifolia (Leadwort-leaved tobacco) protein is Zeaxanthin epoxidase, chloroplastic (ABA2).